A 480-amino-acid polypeptide reads, in one-letter code: MYQLLFQRLGVTLTAGNDKKTSIPSNQLVGHLIGLILLCDDLNEAFADFQALLQNGIAISSSDRGYLVFDAHVTDCGCHLRAQMIQDVFSYFKNHEVTKLYIFDAVAKKLNELKRHCISLIQTLCWENTSAQKLGFPKNIKSYEELLKLLQWDTADISSAIADSFPMNPNNADQNEKGLVWNVTKLEVVLEFLYCSHFLSKNKIYNKKENLDSVTIDFNNAFEKRQLLSNKFHCQGTGKLGVGCRYLKHAKQSKNSFISVVSNLQSRLALLSIAFLKSRCTLPCDIEALQKNSPRNVSAIPNFLHFLILEREWSQNETPILLAVRKLHEHEHCDLYFEARINPHTFEWTLQHKECCEFEHHTPYIVITALATGSSTTKTAQLLAWELMKAQKNFRQFWLTFMSQHRQYPFEIEHDEDQLLETQVSQDIFELYCQSKREDRNQILFDDSTSLLPKHIFTEYPSIFFNFQKNVCSKHGALVI.

It participates in siderophore biosynthesis. Functionally, probable cyclodipeptide synthase; part of the PUL gene cluster that mediates the formation of pulcherrimin, a red iron-containing pigment composed of two cyclized and modified leucine molecules that acts as a siderophore, a chelator that binds iron outside the cell for subsequent uptake. Two leucine molecules are cyclized via a cyclodipeptide synthase, and the resulting diketopiperazine is oxidized by a cytochrome P450 monooxygenase to generate pulcherriminic acid (PA), which can then spontaneously bind iron to form pulcherrimin. The probable cyclodipeptide synthase PUL1 and the cytochrome P450 monooxygenase PUL2 encode the enzymes responsible for the two-step pulcherrimin biosynthesis pathway. In Kluyveromyces lactis (strain ATCC 8585 / CBS 2359 / DSM 70799 / NBRC 1267 / NRRL Y-1140 / WM37) (Yeast), this protein is Probable cyclodipeptide synthase PUL1.